Reading from the N-terminus, the 157-residue chain is Protein Smg homolog (157 aa).

This sequence belongs to the Smg family.

This chain is Protein Smg homolog, found in Colwellia psychrerythraea (strain 34H / ATCC BAA-681) (Vibrio psychroerythus).